The following is a 311-amino-acid chain: MAQPLFESTIKSLPLLGRGKVRDIYAVDADKLLIVTSDRLSAFDVILPDPIPDKGRVLTAMAAFWFARLGHIVPNQLTGIDPESVVASDERDQVRGRSLVVKRLKPLPIEAVVRGYVIGSGWKDYQDTGAICGIRLPAGLAQAAKLPSPIFTPASKADVGDHDENISFAAAQTRCAAELTGLLAGSGTNGARLATEARDAAITLYVEAANYAAGRGIIIADTKFEFGIDSAGTLHLIDEALTPDSSRFWPADSYREGISPPSYDKQYVRDYLETLTWGKKAPGPHLPADVIAKTAAKYREAFERLTGQSLA.

It belongs to the SAICAR synthetase family.

The catalysed reaction is 5-amino-1-(5-phospho-D-ribosyl)imidazole-4-carboxylate + L-aspartate + ATP = (2S)-2-[5-amino-1-(5-phospho-beta-D-ribosyl)imidazole-4-carboxamido]succinate + ADP + phosphate + 2 H(+). It functions in the pathway purine metabolism; IMP biosynthesis via de novo pathway; 5-amino-1-(5-phospho-D-ribosyl)imidazole-4-carboxamide from 5-amino-1-(5-phospho-D-ribosyl)imidazole-4-carboxylate: step 1/2. This is Phosphoribosylaminoimidazole-succinocarboxamide synthase from Aromatoleum aromaticum (strain DSM 19018 / LMG 30748 / EbN1) (Azoarcus sp. (strain EbN1)).